The primary structure comprises 297 residues: 4-diphosphocytidyl-2-C-methyl-D-erythritol kinase (297 aa).

Lys-19 is an active-site residue. Residue 105 to 115 participates in ATP binding; the sequence is PIASGIGGGSA. Asp-147 is a catalytic residue.

Belongs to the GHMP kinase family. IspE subfamily.

It catalyses the reaction 4-CDP-2-C-methyl-D-erythritol + ATP = 4-CDP-2-C-methyl-D-erythritol 2-phosphate + ADP + H(+). It participates in isoprenoid biosynthesis; isopentenyl diphosphate biosynthesis via DXP pathway; isopentenyl diphosphate from 1-deoxy-D-xylulose 5-phosphate: step 3/6. Catalyzes the phosphorylation of the position 2 hydroxy group of 4-diphosphocytidyl-2C-methyl-D-erythritol. This chain is 4-diphosphocytidyl-2-C-methyl-D-erythritol kinase, found in Rhizobium etli (strain CIAT 652).